The primary structure comprises 470 residues: tRNA modification GTPase MnmE (470 aa).

The (6S)-5-formyl-5,6,7,8-tetrahydrofolate site is built by Arg24, Glu81, and Lys122. The 166-residue stretch at 218–383 folds into the TrmE-type G domain; the sequence is GIKIVIAGKP…LQEYLSNNIK (166 aa). Asn228 contacts K(+). Residues 228 to 233, 247 to 253, and 272 to 275 contribute to the GTP site; these read NAGKSS, STISGTT, and DTAG. Residue Ser232 coordinates Mg(2+). Ser247, Ile249, and Thr252 together coordinate K(+). Residue Thr253 participates in Mg(2+) binding. Residue Lys470 coordinates (6S)-5-formyl-5,6,7,8-tetrahydrofolate.

The protein belongs to the TRAFAC class TrmE-Era-EngA-EngB-Septin-like GTPase superfamily. TrmE GTPase family. In terms of assembly, homodimer. Heterotetramer of two MnmE and two MnmG subunits. The cofactor is K(+).

Its subcellular location is the cytoplasm. Its function is as follows. Exhibits a very high intrinsic GTPase hydrolysis rate. Involved in the addition of a carboxymethylaminomethyl (cmnm) group at the wobble position (U34) of certain tRNAs, forming tRNA-cmnm(5)s(2)U34. The polypeptide is tRNA modification GTPase MnmE (Blochmanniella pennsylvanica (strain BPEN)).